The primary structure comprises 323 residues: NADH-ubiquinone oxidoreductase chain 1 (323 aa).

8 consecutive transmembrane segments (helical) span residues Leu8–Ile28, Leu74–Leu94, Leu105–Gly125, Ser150–Phe170, Thr176–Ala196, Leu227–Phe247, Glu258–Val278, and Phe298–Ser318.

Belongs to the complex I subunit 1 family.

It localises to the mitochondrion inner membrane. It catalyses the reaction a ubiquinone + NADH + 5 H(+)(in) = a ubiquinol + NAD(+) + 4 H(+)(out). In terms of biological role, core subunit of the mitochondrial membrane respiratory chain NADH dehydrogenase (Complex I) that is believed to belong to the minimal assembly required for catalysis. Complex I functions in the transfer of electrons from NADH to the respiratory chain. The immediate electron acceptor for the enzyme is believed to be ubiquinone. The sequence is that of NADH-ubiquinone oxidoreductase chain 1 (MT-ND1) from Latimeria chalumnae (Coelacanth).